We begin with the raw amino-acid sequence, 457 residues long: Cyclic dof factor 2 (457 aa).

Residues 1–130 form a disordered region; that stretch reads MADPAIKLFG…GGTACSQEGK (130 aa). Residues 22–35 are compositionally biased toward polar residues; the sequence is DSSSSYTGFLTETQ. Composition is skewed to acidic residues over residues 45–54 and 62–73; these read TGDDDDEEMG and EGDDVGDGGGES. Basic and acidic residues-rich tracts occupy residues 74 to 94 and 106 to 118; these read ETDK…RNES and EKTE…KTNE. The segment at 138–192 adopts a Dof-type zinc-finger fold; that stretch reads LPCPRCNSMETKFCYYNNYNVNQPRHFCKKCQRYWTAGGTMRNVPVGAGRRKNKS. The Zn(2+) site is built by cysteine 140, cysteine 143, cysteine 165, and cysteine 168. 2 disordered regions span residues 334-377 and 417-457; these read QPNS…KSKP and AFRS…HESS. Residues 337–346 are compositionally biased toward low complexity; that stretch reads SPSGSNPNSP.

As to quaternary structure, interacts with ADO2 (via kelch repeats) and ADO3 (via kelch repeats). As to expression, expressed in the vasculature of cotyledons and hypocotyls, leaves and roots.

It localises to the nucleus. Functionally, transcription factor that binds specifically to a 5'-AA[AG]G-3' consensus core sequence. Regulates a photoperiodic flowering response. Transcriptional repressor of 'CONSTANS' expression. The stability of CDF2 is controlled by 'GIGANTEA' and redundantly by ADO3, ADO2 and/or ADO1. The sequence is that of Cyclic dof factor 2 (CDF2) from Arabidopsis thaliana (Mouse-ear cress).